Here is a 704-residue protein sequence, read N- to C-terminus: Elongation factor G (704 aa).

Positions 8-291 (DKVRNIGIMA…AVVDYLASPL (284 aa)) constitute a tr-type G domain. GTP contacts are provided by residues 17–24 (AHIDAGKT), 90–94 (DTPGH), and 144–147 (NKMD).

Belongs to the TRAFAC class translation factor GTPase superfamily. Classic translation factor GTPase family. EF-G/EF-2 subfamily.

It is found in the cytoplasm. Catalyzes the GTP-dependent ribosomal translocation step during translation elongation. During this step, the ribosome changes from the pre-translocational (PRE) to the post-translocational (POST) state as the newly formed A-site-bound peptidyl-tRNA and P-site-bound deacylated tRNA move to the P and E sites, respectively. Catalyzes the coordinated movement of the two tRNA molecules, the mRNA and conformational changes in the ribosome. In Chlorobium phaeovibrioides (strain DSM 265 / 1930) (Prosthecochloris vibrioformis (strain DSM 265)), this protein is Elongation factor G.